Here is a 239-residue protein sequence, read N- to C-terminus: ATP-dependent dethiobiotin synthetase BioD (239 aa).

Position 15–20 (15–20 (EIGKTF)) interacts with ATP. Thr-19 is a binding site for Mg(2+). Lys-40 is an active-site residue. Residues Asp-57, 118–121 (EGVG), and 178–179 (NH) each bind ATP. The Mg(2+) site is built by Asp-57 and Glu-118.

This sequence belongs to the dethiobiotin synthetase family. As to quaternary structure, homodimer. Mg(2+) serves as cofactor.

It localises to the cytoplasm. It carries out the reaction (7R,8S)-7,8-diammoniononanoate + CO2 + ATP = (4R,5S)-dethiobiotin + ADP + phosphate + 3 H(+). It participates in cofactor biosynthesis; biotin biosynthesis; biotin from 7,8-diaminononanoate: step 1/2. In terms of biological role, catalyzes a mechanistically unusual reaction, the ATP-dependent insertion of CO2 between the N7 and N8 nitrogen atoms of 7,8-diaminopelargonic acid (DAPA, also called 7,8-diammoniononanoate) to form a ureido ring. The sequence is that of ATP-dependent dethiobiotin synthetase BioD from Burkholderia multivorans (strain ATCC 17616 / 249).